The chain runs to 155 residues: Cyanate hydratase (155 aa).

Residues Arg-101, Glu-104, and Ser-127 contribute to the active site.

The protein belongs to the cyanase family.

The enzyme catalyses cyanate + hydrogencarbonate + 3 H(+) = NH4(+) + 2 CO2. Catalyzes the reaction of cyanate with bicarbonate to produce ammonia and carbon dioxide. This Coccidioides posadasii (strain C735) (Valley fever fungus) protein is Cyanate hydratase.